A 325-amino-acid chain; its full sequence is Biotin synthase (325 aa).

The Radical SAM core domain occupies 46–270 (NNSNNIDLCS…IAICKLILPN (225 aa)). [4Fe-4S] cluster-binding residues include cysteine 64, cysteine 68, and cysteine 71. Positions 107, 139, 198, and 274 each coordinate [2Fe-2S] cluster.

The protein belongs to the radical SAM superfamily. Biotin synthase family. As to quaternary structure, homodimer. The cofactor is [4Fe-4S] cluster. It depends on [2Fe-2S] cluster as a cofactor.

It carries out the reaction (4R,5S)-dethiobiotin + (sulfur carrier)-SH + 2 reduced [2Fe-2S]-[ferredoxin] + 2 S-adenosyl-L-methionine = (sulfur carrier)-H + biotin + 2 5'-deoxyadenosine + 2 L-methionine + 2 oxidized [2Fe-2S]-[ferredoxin]. The protein operates within cofactor biosynthesis; biotin biosynthesis; biotin from 7,8-diaminononanoate: step 2/2. Catalyzes the conversion of dethiobiotin (DTB) to biotin by the insertion of a sulfur atom into dethiobiotin via a radical-based mechanism. The chain is Biotin synthase from Methanococcus aeolicus (strain ATCC BAA-1280 / DSM 17508 / OCM 812 / Nankai-3).